A 164-amino-acid chain; its full sequence is Low molecular weight protein-tyrosine-phosphatase (164 aa).

C9 (nucleophile) is an active-site residue. R15 is a catalytic residue. Residue D128 is the Proton donor of the active site.

This sequence belongs to the low molecular weight phosphotyrosine protein phosphatase family.

It carries out the reaction O-phospho-L-tyrosyl-[protein] + H2O = L-tyrosyl-[protein] + phosphate. Acts on tyrosine phosphorylated proteins, low-MW aryl phosphates and natural and synthetic acyl phosphates. May be involved in the regulation of sulfur amino acid metabolism. This Streptomyces coelicolor (strain ATCC BAA-471 / A3(2) / M145) protein is Low molecular weight protein-tyrosine-phosphatase (ptpA).